The primary structure comprises 252 residues: Transcriptional regulatory protein HptR (252 aa).

The Response regulatory domain maps to 3–118 (KVVICDDERI…QLEVILGRLV (116 aa)). D55 bears the 4-aspartylphosphate mark. Residues 153–250 (NQIVDQIKQS…QMAPSDYCKQ (98 aa)) form the HTH araC/xylS-type domain. 2 DNA-binding regions (H-T-H motif) span residues 170–191 (SDLIQHIDVSESYAMRTFKDHV) and 217–240 (HYEIADKVGFSEYKMFSYHFKKYL).

Phosphorylated by HptS.

It localises to the cytoplasm. Its function is as follows. Member of the two-component regulatory system HptS/HptR that regulates genes involved in hexose phosphate transport system in response to changes in extracellular phosphate sources. Activates uhpT expression to facilitate glucose-6-phosphate/G6P utilization by directly binding to its promoter. Antagonizes CcpA-dependent transcription of a subset of CcpA-regulated genes involved in antibiotic susceptibility. The protein is Transcriptional regulatory protein HptR (hptR) of Staphylococcus aureus (strain bovine RF122 / ET3-1).